Consider the following 142-residue polypeptide: FAD synthase (142 aa).

Residues 9 to 10 (TF), 14 to 17 (HPGH), Asp-92, and Tyr-119 contribute to the ATP site.

This sequence belongs to the archaeal FAD synthase family. In terms of assembly, homodimer. The cofactor is a divalent metal cation.

It catalyses the reaction FMN + ATP + H(+) = FAD + diphosphate. The protein operates within cofactor biosynthesis; FAD biosynthesis; FAD from FMN: step 1/1. Catalyzes the transfer of the AMP portion of ATP to flavin mononucleotide (FMN) to produce flavin adenine dinucleotide (FAD) coenzyme. In Halorhabdus utahensis (strain DSM 12940 / JCM 11049 / AX-2), this protein is FAD synthase.